We begin with the raw amino-acid sequence, 492 residues long: Catalase isozyme 3 (492 aa).

Active-site residues include histidine 65 and asparagine 138. Tyrosine 348 provides a ligand contact to heme.

It belongs to the catalase family. Homotetramer. Heme is required as a cofactor.

It is found in the peroxisome. The catalysed reaction is 2 H2O2 = O2 + 2 H2O. Occurs in almost all aerobically respiring organisms and serves to protect cells from the toxic effects of hydrogen peroxide. The protein is Catalase isozyme 3 (CAT3) of Nicotiana plumbaginifolia (Leadwort-leaved tobacco).